We begin with the raw amino-acid sequence, 153 residues long: Probable disulfide formation protein (153 aa).

The chain crosses the membrane as a helical span at residues aspartate 4–tyrosine 23. Cysteine 33 and cysteine 36 are disulfide-bonded. Helical transmembrane passes span alanine 38–glycine 57 and tyrosine 64–leucine 81. Cysteine 93 and cysteine 101 are joined by a disulfide. The chain crosses the membrane as a helical span at residues arginine 117–proline 139.

Belongs to the DsbB family. BdbC subfamily.

It localises to the cell membrane. Required for disulfide bond formation in some proteins. In Deinococcus radiodurans (strain ATCC 13939 / DSM 20539 / JCM 16871 / CCUG 27074 / LMG 4051 / NBRC 15346 / NCIMB 9279 / VKM B-1422 / R1), this protein is Probable disulfide formation protein.